Reading from the N-terminus, the 708-residue chain is Lactotransferrin (708 aa).

Residues 1–19 form the signal peptide; the sequence is MKLLFLALLSLLALGPSLA. 2 consecutive Transferrin-like domains span residues 25-352 and 364-693; these read VRWC…NLKE and VVWC…NLRQ. Disulfide bonds link cysteine 28–cysteine 64 and cysteine 38–cysteine 55. Aspartate 79 provides a ligand contact to Fe(3+). The active site involves arginine 92. Residue tyrosine 111 coordinates Fe(3+). Cystine bridges form between cysteine 134–cysteine 217, cysteine 176–cysteine 192, cysteine 179–cysteine 202, cysteine 189–cysteine 200, and cysteine 250–cysteine 264. Hydrogencarbonate is bound at residue threonine 136. N-linked (GlcNAc...) asparagine glycosylation occurs at asparagine 139. Hydrogencarbonate-binding residues include arginine 140, alanine 142, and glycine 143. Position 211 (tyrosine 211) interacts with Fe(3+). Histidine 272 serves as a coordination point for Fe(3+). Serine 278 acts as the Nucleophile in catalysis. 2 disulfides stabilise this stretch: cysteine 367–cysteine 399 and cysteine 377–cysteine 390. The N-linked (GlcNAc...) asparagine glycan is linked to asparagine 385. The Fe(3+) site is built by aspartate 414 and aspartate 452. Disulfide bonds link cysteine 476-cysteine 551, cysteine 510-cysteine 524, cysteine 521-cysteine 534, and cysteine 592-cysteine 606. Positions 478, 482, 484, and 485 each coordinate hydrogencarbonate. Asparagine 495 carries N-linked (GlcNAc...) asparagine glycosylation. A Fe(3+)-binding site is contributed by tyrosine 545. Histidine 614 serves as a coordination point for Fe(3+).

This sequence belongs to the transferrin family. As to quaternary structure, monomer. Found in a complex with LTF, CLU, EPPIN and SEMG1. Interacts with prey activated coagulation factor X; the interaction inhibits coagulation factor X catalytic activity. Found in a complex with MPO and LTF; interacts directly with CP, allows Fe(3+) incorporation into LTF and activation of CP ferroxidase activity. Post-translationally, N-glycosylated. Glycosylation is important for draculin anticoagulant activity. Probably also O-glycosylated. As to expression, expressed in the submaxillary gland and secreted in the saliva (at protein level).

It is found in the secreted. Functionally, transferrins are iron binding transport proteins which can bind two Fe(3+) ions in association with the binding of an anion, usually bicarbonate. Major iron-binding and multifunctional protein found in exocrine fluids such as breast milk and mucosal secretions. Has antimicrobial activity. Antimicrobial properties may include bacteriostasis, which is related to its ability to sequester free iron and thus inhibit microbial growth, as well as direct bactericidal properties leading to the release of lipopolysaccharides from the bacterial outer membrane. May have anabolic, differentiating and anti-apoptotic effects on osteoblasts and may also inhibit osteoclastogenesis, possibly playing a role in the regulation of bone growth. May interfere with the lipopolysaccharide (LPS)-stimulated TLR4 signaling. In terms of biological role, the lactotransferrin transferrin-like domain 1 functions as a serine protease of the peptidase S60 family that cuts arginine rich regions. This function contributes to the antimicrobial activity. Shows a preferential cleavage at -Arg-Ser-Arg-Arg-|- and -Arg-Arg-Ser-Arg-|-, and of Z-Phe-Arg-|-aminomethylcoumarin sites. Its function is as follows. Acts as an anticoagulant of the blood coagulation cascade of the bat's prey by inhibiting coagulation factor IX and activated coagulation factor X. The sequence is that of Lactotransferrin from Desmodus rotundus (Vampire bat).